The sequence spans 250 residues: Corrinoid adenosyltransferase MMAB (250 aa).

The transit peptide at 1-32 directs the protein to the mitochondrion; it reads MAVCGLGSRLGLGSRLGLRGCFGAARLLYPRF. The tract at residues 34–59 is disordered; the sequence is SRGPQGVEDGDRPQPSSKTPRIPKIY. ATP is bound by residues 60-63, 68-69, and Lys78; these read TKTG and SS. Ser134 carries the post-translational modification Phosphoserine. 190 to 194 is an ATP binding site; that stretch reads RRAER. Lys211 carries the post-translational modification N6-succinyllysine. An ATP-binding site is contributed by Asn214. N6-acetyllysine; alternate is present on Lys230. An N6-succinyllysine; alternate modification is found at Lys230.

The protein belongs to the Cob(I)alamin adenosyltransferase family. In terms of assembly, homotrimer. Expressed in liver and skeletal muscle.

Its subcellular location is the mitochondrion. It carries out the reaction cob(I)alamin-[corrinoid adenosyltransferase] + ATP = apo-[corrinoid adenosyltransferase] + adenosylcob(III)alamin + triphosphate. Functionally, converts cob(I)alamin to adenosylcobalamin (adenosylcob(III)alamin), a coenzyme for methylmalonyl-CoA mutase, therefore participates in the final step of the vitamin B12 conversion. Generates adenosylcobalamin (AdoCbl) and directly delivers the cofactor to MUT in a transfer that is stimulated by ATP-binding to MMAB and gated by MMAA. The protein is Corrinoid adenosyltransferase MMAB of Homo sapiens (Human).